We begin with the raw amino-acid sequence, 647 residues long: MSKIIELPEILANQIAAGEVIERPSSVVKELVENSIDAGASQITIEIEEAGLKSIQVTDNGEGIDHEDVPLALRRHATSKIKKQADLFRIRTLGFRGEAIPSIASVSRFTIETATEAGRHGTLLVAQGGEIEEHVPTSSPVGTKIKIEDLFFNTPARLKYMKSQQAELSHIVDVINRLSLAHPEVAFTLISDGREMTRTAGSGNLRQAIAGIYGLATAKKMVEISASDLDFEVSGYVSLPELTRANRNYITILINGRYIKNFLLNRAILDGYGSKLMVGRFPLAVINIQIDPYLADVNVHPTKQEVRISKERELMALISQAIATSLKEQDLIPDALENLAKSTVKRASKPEQTSLPLKENRLYYDKKQNDFFLKPQVAEQQLSFEESAKPVHEATDEKAEPQSTSVKFAERKPVSYDQLDHPELDQASLERAVDKLEQEEKSSFPELEYFGQMHGTYLFAQGKGGLYIIDQHAAQERVKYEYYREKIGDVDNSQQQLLVPYIFEFPADDMLRIKQRMELLEDAGIFLEEYGANQFILREHPIWFKEEEIEAGIYEMCDMLLLTKEVSIKKYRAELAIMMSCKRSIKANHSLDDYSARDLLFQLSQCDNPYNCPHGRPVLVNFTKSDMEKMFRRIQENHTSLRELGKY.

Residues 387–400 (SAKPVHEATDEKAE) show a composition bias toward basic and acidic residues. The interval 387-412 (SAKPVHEATDEKAEPQSTSVKFAERK) is disordered.

This sequence belongs to the DNA mismatch repair MutL/HexB family.

Its function is as follows. This protein is involved in the repair of mismatches in DNA. It is required for dam-dependent methyl-directed DNA mismatch repair. May act as a 'molecular matchmaker', a protein that promotes the formation of a stable complex between two or more DNA-binding proteins in an ATP-dependent manner without itself being part of a final effector complex. This chain is DNA mismatch repair protein MutL, found in Streptococcus sanguinis (strain SK36).